The sequence spans 529 residues: Low affinity inorganic phosphate transporter 5 (529 aa).

The Cytoplasmic portion of the chain corresponds to 1 to 21 (MASNNLNVLNALDTAHTQWYH). A helical membrane pass occupies residues 22–42 (VTAVVIAGMGFFTDAYDLFCI). Topologically, residues 43–71 (STISKLLGRLYYYDPHTHAPGKLPHTVNN) are extracellular. Residues 72 to 92 (WVTGVALVGTLTGQLVFGWLG) traverse the membrane as a helical segment. Topologically, residues 93-99 (DKLGRKK) are cytoplasmic. A helical membrane pass occupies residues 100–120 (VYGLTLILMVICALSSGLSFG). Over 121-124 (YSRK) the chain is Extracellular. The chain crosses the membrane as a helical span at residues 125–145 (VVIGTLCFFRFWLGFGIGGDY). Over 146 to 163 (PLSATIMSEYANKRTRGA) the chain is Cytoplasmic. A helical transmembrane segment spans residues 164-184 (FIAAVFAMQGVGIIFAGLVLM). Over 185–211 (TVSKVFLMRYAGKAFSTDEVFSTEPEA) the chain is Extracellular. A helical transmembrane segment spans residues 212 to 232 (DYVWRIVLMLGALPALLTYYW). Residues 233–291 (RMKMPETGRYTAIIEGNAKQAAIDMGKVLEIEIQAEGEKLAKFKSANDYSLLSNEFFQR) are Cytoplasmic-facing. A helical membrane pass occupies residues 292–312 (HGLHLIGTMSTWFLLDIAFYS). Over 313-344 (QNLTQKDIFPTMGLVSDAKSISALREMFETSR) the chain is Extracellular. A glycan (N-linked (GlcNAc...) asparagine) is linked at asparagine 314. A helical membrane pass occupies residues 345–365 (AMFVIALLGTFPGYWFTVFFI). Residues 366 to 374 (EKIGRFKIQ) lie on the Cytoplasmic side of the membrane. The chain crosses the membrane as a helical span at residues 375 to 395 (LMGFFMMSIFMAIIGVRYDYL). At 396 to 405 (KTKDHKWTFA) the chain is on the extracellular side. Residues 406 to 426 (ALYGLTFFFANSGPNSTTFVL) form a helical membrane-spanning segment. Residues 427-472 (PAELFPTRVRSTCHALSAASGKAGAMVSAFGVQQYTQDGEVHKIKK) lie on the Cytoplasmic side of the membrane. A helical transmembrane segment spans residues 473 to 493 (AMLFLAFTNMVGFCCTFLVTE). The Extracellular segment spans residues 494–529 (TKGRSLEEISGEDENQNETKMKGRPVSGGHQDDGWD). Residues 500-529 (EEISGEDENQNETKMKGRPVSGGHQDDGWD) form a disordered region. N-linked (GlcNAc...) asparagine glycosylation is present at asparagine 510.

This sequence belongs to the major facilitator superfamily. Phosphate:H(+) symporter (TC 2.A.1.9) family. As to expression, expressed at low levels in non-mycorrhized roots.

It is found in the cell membrane. It carries out the reaction phosphate(in) + H(+)(in) = phosphate(out) + H(+)(out). Functionally, low-affinity transporter for external inorganic phosphate (Pi) probably involved in the acquisition of phosphate released by arbuscular mycorrhizal (AM) fungi during AM symbiosis. This is Low affinity inorganic phosphate transporter 5 from Petunia hybrida (Petunia).